Here is a 196-residue protein sequence, read N- to C-terminus: FAD-linked sulfhydryl oxidase ERV2 (196 aa).

At 1 to 12 (MKQIVKRSHAIR) the chain is on the cytoplasmic side. A helical; Signal-anchor membrane pass occupies residues 13–35 (IVAALGIIGLWMFFSSNELSIAT). At 36 to 196 (PGLIKAKSGI…SLEKEAKQHG (161 aa)) the chain is on the lumenal side. Residues 72 to 174 (MGDDKVKKEV…YDCATILEDY (103 aa)) form the ERV/ALR sulfhydryl oxidase domain. 3 residues coordinate FAD: Lys-78, Arg-83, and Trp-86. Residues Cys-121 and Cys-124 are joined by a disulfide bond. His-127, Cys-150, His-153, Asn-157, Lys-162, and Tyr-174 together coordinate FAD. Cys-150 and Cys-167 are disulfide-bonded. Cys-176 and Cys-178 are disulfide-bonded.

Homodimer. Interacts with the substrate protein PDI1, forming transient intermolecular disulfide bridges. FAD is required as a cofactor.

The protein localises to the endoplasmic reticulum membrane. The catalysed reaction is 2 R'C(R)SH + O2 = R'C(R)S-S(R)CR' + H2O2. In terms of biological role, FAD-dependent sulfhydryl oxidase that catalyzes disulfide bond formation in the endoplasmic reticulum lumen in parallel to ERO1. This chain is FAD-linked sulfhydryl oxidase ERV2 (ERV2), found in Saccharomyces cerevisiae (strain ATCC 204508 / S288c) (Baker's yeast).